Consider the following 191-residue polypeptide: Reticulon-like protein B15 (191 aa).

The Reticulon domain maps to 13-191 (VADLCLWKDK…SKIPRAPKVE (179 aa)). 3 consecutive transmembrane segments (helical) span residues 23–43 (INSG…EFME), 47–67 (VPLL…WAKF), and 122–142 (VAII…YICL).

Its subcellular location is the endoplasmic reticulum membrane. This chain is Reticulon-like protein B15 (RTNLB15), found in Arabidopsis thaliana (Mouse-ear cress).